The following is a 132-amino-acid chain: Insulin-like 3 (132 aa).

The signal sequence occupies residues 1–24; that stretch reads MSPRPLAWALVLLGAALAVALALG. Disulfide bonds link cysteine 36-cysteine 117, cysteine 48-cysteine 130, and cysteine 116-cysteine 121. Positions 61–104 are cleaved as a propeptide — c peptide like; sequence VAGGDRELLQWLEGRHLHGQVSDGDPMLVLVPQALPQASLHHHH.

This sequence belongs to the insulin family. As to quaternary structure, heterodimer of a B chain and an A chain linked by two disulfide bonds. As to expression, more strongly expressed in testis than in ovary.

It localises to the secreted. Its function is as follows. Seems to play a role in testicular function. May be a trophic hormone with a role in testicular descent in fetal life. Is a ligand for LGR8 receptor. The chain is Insulin-like 3 (INSL3) from Canis lupus familiaris (Dog).